A 205-amino-acid polypeptide reads, in one-letter code: Imidazoleglycerol-phosphate dehydratase (205 aa).

It belongs to the imidazoleglycerol-phosphate dehydratase family.

It carries out the reaction D-erythro-1-(imidazol-4-yl)glycerol 3-phosphate = 3-(imidazol-4-yl)-2-oxopropyl phosphate + H2O. It participates in amino-acid biosynthesis; L-histidine biosynthesis; L-histidine from 5-phospho-alpha-D-ribose 1-diphosphate: step 6/9. The sequence is that of Imidazoleglycerol-phosphate dehydratase (HIS3) from Phaffia rhodozyma (Yeast).